Consider the following 339-residue polypeptide: Uroporphyrinogen decarboxylase (339 aa).

Residues 23-27 (RQAGR), D72, Y147, T202, and H315 each bind substrate.

Belongs to the uroporphyrinogen decarboxylase family. Homodimer.

It is found in the cytoplasm. It carries out the reaction uroporphyrinogen III + 4 H(+) = coproporphyrinogen III + 4 CO2. Its pathway is porphyrin-containing compound metabolism; protoporphyrin-IX biosynthesis; coproporphyrinogen-III from 5-aminolevulinate: step 4/4. Its function is as follows. Catalyzes the decarboxylation of four acetate groups of uroporphyrinogen-III to yield coproporphyrinogen-III. In Geobacter sp. (strain M21), this protein is Uroporphyrinogen decarboxylase.